A 317-amino-acid chain; its full sequence is Acetyl-coenzyme A carboxylase carboxyl transferase subunit alpha (317 aa).

Positions 38-292 (TLEERLARLE…DNIIKQSLVE (255 aa)) constitute a CoA carboxyltransferase C-terminal domain.

This sequence belongs to the AccA family. Acetyl-CoA carboxylase is a heterohexamer composed of biotin carboxyl carrier protein (AccB), biotin carboxylase (AccC) and two subunits each of ACCase subunit alpha (AccA) and ACCase subunit beta (AccD).

The protein resides in the cytoplasm. It carries out the reaction N(6)-carboxybiotinyl-L-lysyl-[protein] + acetyl-CoA = N(6)-biotinyl-L-lysyl-[protein] + malonyl-CoA. Its pathway is lipid metabolism; malonyl-CoA biosynthesis; malonyl-CoA from acetyl-CoA: step 1/1. Component of the acetyl coenzyme A carboxylase (ACC) complex. First, biotin carboxylase catalyzes the carboxylation of biotin on its carrier protein (BCCP) and then the CO(2) group is transferred by the carboxyltransferase to acetyl-CoA to form malonyl-CoA. This chain is Acetyl-coenzyme A carboxylase carboxyl transferase subunit alpha, found in Oceanobacillus iheyensis (strain DSM 14371 / CIP 107618 / JCM 11309 / KCTC 3954 / HTE831).